A 602-amino-acid chain; its full sequence is Glutamine--fructose-6-phosphate aminotransferase [isomerizing] (602 aa).

Cys-2 acts as the Nucleophile; for GATase activity in catalysis. The Glutamine amidotransferase type-2 domain occupies 2–222 (CGIFGIIFAE…DGEYGYITAG (221 aa)). SIS domains are found at residues 284–422 (VANA…ALGH) and 452–592 (LAKR…PDKP). Lys-597 acts as the For Fru-6P isomerization activity in catalysis.

As to quaternary structure, homodimer.

The protein resides in the cytoplasm. The catalysed reaction is D-fructose 6-phosphate + L-glutamine = D-glucosamine 6-phosphate + L-glutamate. Catalyzes the first step in hexosamine metabolism, converting fructose-6P into glucosamine-6P using glutamine as a nitrogen source. This chain is Glutamine--fructose-6-phosphate aminotransferase [isomerizing], found in Pyrobaculum aerophilum (strain ATCC 51768 / DSM 7523 / JCM 9630 / CIP 104966 / NBRC 100827 / IM2).